Here is a 376-residue protein sequence, read N- to C-terminus: Actin-related protein T1 (376 aa).

Belongs to the actin family. In terms of tissue distribution, in skin, expressed in the basal, spinous and granular layers of the epidermis. Also expressed in hair follicles, sebaceaous glands, eccrine sweat glands and semen.

It is found in the cytoplasm. It localises to the cytoskeleton. The protein localises to the nucleus. Its subcellular location is the cytoplasmic vesicle. The protein resides in the secretory vesicle. It is found in the acrosome. In terms of biological role, negatively regulates the Hedgehog (SHH) signaling. Binds to the promoter of the SHH signaling mediator, GLI1, and inhibits its expression. This chain is Actin-related protein T1, found in Homo sapiens (Human).